A 158-amino-acid polypeptide reads, in one-letter code: Snaclec coagulation factor X-activating enzyme light chain 2 (158 aa).

A signal peptide spans Met1–Gly24. 3 disulfide bridges follow: Cys27–Cys38, Cys55–Cys152, and Cys127–Cys144. Residues Tyr34–Lys153 form the C-type lectin domain. An N-linked (GlcNAc...) (complex) asparagine glycan is attached at Asn82.

The protein belongs to the snaclec family. As to quaternary structure, heterotrimer; disulfide-linked. The heterotrimer consists of 1 heavy chain (a metalloproteinase) and 2 light chains: LC1 and LC2. Post-translationally, N-glycosylated; probably required for conformation. Removal of easily accessible sugars does not change its functional capacity, but removal of the core sugars with N-glycanase causes a virtually complete loss of enzyme activity, apparently as a result of major conformational changes in the molecule. Not O-glycosylated. In terms of tissue distribution, expressed by the venom gland.

The protein resides in the secreted. Functionally, regulatory subunit of the blood coagulation factor X- and IX-activating enzyme. The enzyme activates coagulation factor X (F10) by cleaving the Arg-Ile bond and is also able to activate coagulation factor IX (F9) and protein S (PROS1) by specific cleavage of Arg-Ile and Arg-Val bonds. May serve as an exosite by which the enzyme recognizes and binds to the Gla domain of factor X (F10) and factor IX (F9) in a calcium-dependent manner. The polypeptide is Snaclec coagulation factor X-activating enzyme light chain 2 (LC2) (Daboia siamensis (Eastern Russel's viper)).